The following is a 463-amino-acid chain: Lipase 6 (463 aa).

An N-terminal signal peptide occupies residues 1 to 16 (MRDLILFLSLLHTIFA). Cysteines 112 and 285 form a disulfide. Residue Ser-196 is the Charge relay system of the active site. N-linked (GlcNAc...) asparagine glycosylation occurs at Asn-231. Residues Asp-348 and His-381 each act as charge relay system in the active site. Cys-364 and Cys-409 are oxidised to a cystine. Asn-422 carries an N-linked (GlcNAc...) asparagine glycan.

This sequence belongs to the AB hydrolase superfamily. Lipase family. Class Lip subfamily.

The protein localises to the secreted. It catalyses the reaction a triacylglycerol + H2O = a diacylglycerol + a fatty acid + H(+). Functionally, secreted lipase that is able to hydrolyze both the neutral triacylglycerols and the monopalmitate ester Tween 40, allowing the use of hydrolyzed products as carbon sources. Has broad lipolytic activity, which may be important for colonization and subsequent infection, therefore contributing to the persistence and virulence in human tissue. The sequence is that of Lipase 6 from Candida albicans (strain SC5314 / ATCC MYA-2876) (Yeast).